We begin with the raw amino-acid sequence, 610 residues long: UvrABC system protein C (610 aa).

Residues 16 to 94 (SQPGVYRMYD…IKLYQPRYNV (79 aa)) form the GIY-YIG domain. Positions 204 to 239 (DQVLTQLISRMETASQNLEFEEAARIRDQIQAVRRV) constitute a UVR domain.

This sequence belongs to the UvrC family. As to quaternary structure, interacts with UvrB in an incision complex.

It localises to the cytoplasm. In terms of biological role, the UvrABC repair system catalyzes the recognition and processing of DNA lesions. UvrC both incises the 5' and 3' sides of the lesion. The N-terminal half is responsible for the 3' incision and the C-terminal half is responsible for the 5' incision. This Escherichia coli (strain SMS-3-5 / SECEC) protein is UvrABC system protein C.